Here is a 445-residue protein sequence, read N- to C-terminus: MREILHIQGGQCGNQIGAKFWEVICDEHGVDNTGKYNGDSDLQLERINVYYNEASGGRYVPRAVLMDLEPGTMDSVRSGPFGQIFRPDNFVFGQSGAGNNWAKGHYTEGAELIDSVLDVVRKEAENCDCLQGFQVCHSLGGGTGSGMGTLLISKIREEYPDRMMLTFSVFPSPKVSDTVVEPYNATLSVHQLVENADECMVLDNEALYDICFRTLKLATPTFGDLNHLISATMSGVTCCLRFPGQLNSDLRKLAVNLIPFPRLHFFMVGFAPLTSRGSQQYRALTVPELTQQMWDAKNMMCAADPRHGRYLTACAMFRGKMSTKEVDEQMINVQNKNSSYFVEWIPNNVKSSVCDIPPKGLKMASTFIGNSTSIQEMFRRVSEQFTAMFRRKAFLHWYTGEGMDEMEFTEAESDMNDLVAEYQQYQDATADDEYEEGEEEEEEAA.

Residues Gln-11, Glu-69, Ser-138, Gly-142, Thr-143, Gly-144, Asn-204, and Asn-226 each coordinate GTP. Glu-69 serves as a coordination point for Mg(2+). A disordered region spans residues 420–445; the sequence is AEYQQYQDATADDEYEEGEEEEEEAA. Positions 429-445 are enriched in acidic residues; the sequence is TADDEYEEGEEEEEEAA.

The protein belongs to the tubulin family. In terms of assembly, dimer of alpha and beta chains. A typical microtubule is a hollow water-filled tube with an outer diameter of 25 nm and an inner diameter of 15 nM. Alpha-beta heterodimers associate head-to-tail to form protofilaments running lengthwise along the microtubule wall with the beta-tubulin subunit facing the microtubule plus end conferring a structural polarity. Microtubules usually have 13 protofilaments but different protofilament numbers can be found in some organisms and specialized cells. Mg(2+) serves as cofactor.

The protein resides in the cytoplasm. It is found in the cytoskeleton. Its function is as follows. Tubulin is the major constituent of microtubules, a cylinder consisting of laterally associated linear protofilaments composed of alpha- and beta-tubulin heterodimers. Microtubules grow by the addition of GTP-tubulin dimers to the microtubule end, where a stabilizing cap forms. Below the cap, tubulin dimers are in GDP-bound state, owing to GTPase activity of alpha-tubulin. The polypeptide is Tubulin beta-5 chain (Gossypium hirsutum (Upland cotton)).